The following is a 576-amino-acid chain: MDAKTQPDRSRDVSQPLDKLGPDETLKANSDYLRGTIKQSLADEITSAVTANDAKLMKFFGIYQQDDRDIRDERRRQKLEAAFSFMVRVRLPGGVCSPGQWLKLDELARNYAGDTLRLTTRQTFQFHRVMKHNLRSLIQGLRDILLDTRAACGDDTRGVMSTVNPDLSKLHAEVYALAKRASDHAVHRTGAYKEIWYEAEREQTDGPEEPFYGRTYMPRKFKIGFAIPPSNDIDVYGQDLGFIAIAHRGKLKGFNVAIGGGLGRTDQSPKTYPRLASVIGYIDADKLFPTIDAVMSVQRDYGDRLDRLHARFKYTIDEKGIDWIKAETERRLGFALKPEQPYTFTSNGDPLGWVKGEDGREHCALFIQNGRVINTPDHPMMDGLRAIAQVHKGMFRVTPNQNLIIADIASRDRPEIEALMKEYGLDQFETRSGLRLNSMACVALPTCGLAMAESERYLPDLLTKIEAILNTYGLTDDPITIRMTGCPNGCARPYIAEIGLTGRAPGKYNLYLGGGFHGERLNKMYLENVGEPAILEALDKTLGHYARDRKPGEHFGDFAIRAGYVVEVKEGRFFND.

Residues 1-12 (MDAKTQPDRSRD) show a composition bias toward basic and acidic residues. Positions 1–26 (MDAKTQPDRSRDVSQPLDKLGPDETL) are disordered. The [4Fe-4S] cluster site is built by Cys441, Cys447, Cys486, and Cys490. Cys490 contacts siroheme.

Belongs to the nitrite and sulfite reductase 4Fe-4S domain family. In terms of assembly, alpha(8)-beta(8). The alpha component is a flavoprotein, the beta component is a hemoprotein. Siroheme serves as cofactor. [4Fe-4S] cluster is required as a cofactor.

It catalyses the reaction hydrogen sulfide + 3 NADP(+) + 3 H2O = sulfite + 3 NADPH + 4 H(+). It functions in the pathway sulfur metabolism; hydrogen sulfide biosynthesis; hydrogen sulfide from sulfite (NADPH route): step 1/1. Its function is as follows. Component of the sulfite reductase complex that catalyzes the 6-electron reduction of sulfite to sulfide. This is one of several activities required for the biosynthesis of L-cysteine from sulfate. In Nitrobacter winogradskyi (strain ATCC 25391 / DSM 10237 / CIP 104748 / NCIMB 11846 / Nb-255), this protein is Sulfite reductase [NADPH] hemoprotein beta-component.